A 422-amino-acid polypeptide reads, in one-letter code: MSILRSPFRLIRSPARFFPSLFHSSCNQSFTNGLKHQSTSSKAMPVSAFYIPSFNLFGKGCLAEAAKQIKMSGFKNTLIVTDPGIIKVGLYDKVKALLEEQSITVHLYDGVQPNPTVGNVNQGLEIVKKENCDSMVSIGGGSAHDCAKGIALLATNGGKIADYEGVDKSSKPQLPLIAINTTAGTASEMTRFAIITEETRHIKMAIIDKHTMPILSVNDPETMYGLPPSLTAATGMDALTHAVEAYVSTAANPITDACAVKCIELVNKYLKRAVDNGKDEEARDNMAYAEFLGGMAFNNASLGYVHAMAHQLGGFYGIPHGVCNAVLLAHVQKFNSRDPRANARLGDIAFHLGCEEHTAEAALDRISQLVLEVKIRPHLVDLGVKEKDFDVLVDHAMKDACGATNPIQPTHDEVKAIFKSAM.

Residues 1 to 29 (MSILRSPFRLIRSPARFFPSLFHSSCNQS) constitute a mitochondrion transit peptide. Positions 82, 114, 141, 142, 181, 182, 190, 192, 203, and 225 each coordinate NAD(+). Positions 237, 241, and 306 each coordinate Fe(2+). 2 residues coordinate NAD(+): His-310 and His-320. His-320 contributes to the Fe(2+) binding site.

The protein belongs to the iron-containing alcohol dehydrogenase family. Zn(2+) serves as cofactor.

Its subcellular location is the mitochondrion matrix. The catalysed reaction is a primary alcohol + NAD(+) = an aldehyde + NADH + H(+). It carries out the reaction a secondary alcohol + NAD(+) = a ketone + NADH + H(+). The enzyme catalyses ethanol + NAD(+) = acetaldehyde + NADH + H(+). In terms of biological role, involved in ethanol oxidation in mitochondria. In Schizosaccharomyces pombe (strain 972 / ATCC 24843) (Fission yeast), this protein is Alcohol dehydrogenase 4 (adh4).